The chain runs to 240 residues: UDP-2,3-diacylglucosamine hydrolase (240 aa).

Mn(2+)-binding residues include Asp-8, His-10, Asp-41, Asn-79, and His-114. 79 to 80 is a substrate binding site; that stretch reads NR. Residues Asp-122, Ser-160, Asn-164, Lys-167, and His-195 each coordinate substrate. Mn(2+) contacts are provided by His-195 and His-197.

Belongs to the LpxH family. Mn(2+) serves as cofactor.

It is found in the cell inner membrane. It catalyses the reaction UDP-2-N,3-O-bis[(3R)-3-hydroxytetradecanoyl]-alpha-D-glucosamine + H2O = 2-N,3-O-bis[(3R)-3-hydroxytetradecanoyl]-alpha-D-glucosaminyl 1-phosphate + UMP + 2 H(+). It functions in the pathway glycolipid biosynthesis; lipid IV(A) biosynthesis; lipid IV(A) from (3R)-3-hydroxytetradecanoyl-[acyl-carrier-protein] and UDP-N-acetyl-alpha-D-glucosamine: step 4/6. Its function is as follows. Hydrolyzes the pyrophosphate bond of UDP-2,3-diacylglucosamine to yield 2,3-diacylglucosamine 1-phosphate (lipid X) and UMP by catalyzing the attack of water at the alpha-P atom. Involved in the biosynthesis of lipid A, a phosphorylated glycolipid that anchors the lipopolysaccharide to the outer membrane of the cell. The chain is UDP-2,3-diacylglucosamine hydrolase from Salmonella paratyphi A (strain ATCC 9150 / SARB42).